The sequence spans 490 residues: Cytochrome P450 2C8 (490 aa).

Positions 100, 204, and 241 each coordinate substrate. S100 carries the phosphoserine modification. C435 contributes to the heme binding site.

It belongs to the cytochrome P450 family. Requires heme as cofactor.

The protein resides in the endoplasmic reticulum membrane. It is found in the microsome membrane. It catalyses the reaction an organic molecule + reduced [NADPH--hemoprotein reductase] + O2 = an alcohol + oxidized [NADPH--hemoprotein reductase] + H2O + H(+). The enzyme catalyses (5Z,8Z,11Z,14Z)-eicosatetraenoate + reduced [NADPH--hemoprotein reductase] + O2 = (11R,12S)-epoxy-(5Z,8Z,14Z)-eicosatrienoate + oxidized [NADPH--hemoprotein reductase] + H2O + H(+). It carries out the reaction (5Z,8Z,11Z,14Z)-eicosatetraenoate + reduced [NADPH--hemoprotein reductase] + O2 = (11S,12R)-epoxy-(5Z,8Z,14Z)-eicosatrienoate + oxidized [NADPH--hemoprotein reductase] + H2O + H(+). The catalysed reaction is (5Z,8Z,11Z,14Z)-eicosatetraenoate + reduced [NADPH--hemoprotein reductase] + O2 = (14R,15S)-epoxy-(5Z,8Z,11Z)-eicosatrienoate + oxidized [NADPH--hemoprotein reductase] + H2O + H(+). It catalyses the reaction (5Z,8Z,11Z,14Z)-eicosatetraenoate + reduced [NADPH--hemoprotein reductase] + O2 = (14S,15R)-epoxy-(5Z,8Z,11Z)-eicosatrienoate + oxidized [NADPH--hemoprotein reductase] + H2O + H(+). The enzyme catalyses (5Z,8Z,11Z,14Z,17Z)-eicosapentaenoate + reduced [NADPH--hemoprotein reductase] + O2 = 11,12-epoxy-(5Z,8Z,14Z,17Z)-eicosatetraenoate + oxidized [NADPH--hemoprotein reductase] + H2O + H(+). It carries out the reaction (5Z,8Z,11Z,14Z,17Z)-eicosapentaenoate + reduced [NADPH--hemoprotein reductase] + O2 = 14,15-epoxy-(5Z,8Z,11Z,17Z)-eicosatetraenoate + oxidized [NADPH--hemoprotein reductase] + H2O + H(+). The catalysed reaction is (5Z,8Z,11Z,14Z,17Z)-eicosapentaenoate + reduced [NADPH--hemoprotein reductase] + O2 = (17R,18S)-epoxy-(5Z,8Z,11Z,14Z)-eicosatetraenoate + oxidized [NADPH--hemoprotein reductase] + H2O + H(+). It catalyses the reaction (5Z,8Z,11Z,14Z,17Z)-eicosapentaenoate + reduced [NADPH--hemoprotein reductase] + O2 = (17S,18R)-epoxy-(5Z,8Z,11Z,14Z)-eicosatetraenoate + oxidized [NADPH--hemoprotein reductase] + H2O + H(+). The enzyme catalyses (4Z,7Z,10Z,13Z,16Z,19Z)-docosahexaenoate + reduced [NADPH--hemoprotein reductase] + O2 = (19R,20S)-epoxy-(4Z,7Z,10Z,13Z,16Z)-docosapentaenoate + oxidized [NADPH--hemoprotein reductase] + H2O + H(+). It carries out the reaction (4Z,7Z,10Z,13Z,16Z,19Z)-docosahexaenoate + reduced [NADPH--hemoprotein reductase] + O2 = (19S,20R)-epoxy-(4Z,7Z,10Z,13Z,16Z)-docosapentaenoate + oxidized [NADPH--hemoprotein reductase] + H2O + H(+). The catalysed reaction is all-trans-retinoate + reduced [NADPH--hemoprotein reductase] + O2 = all-trans-4-hydroxyretinoate + oxidized [NADPH--hemoprotein reductase] + H2O + H(+). It catalyses the reaction 17beta-estradiol + reduced [NADPH--hemoprotein reductase] + O2 = 16alpha,17beta-estriol + oxidized [NADPH--hemoprotein reductase] + H2O + H(+). The enzyme catalyses estrone + reduced [NADPH--hemoprotein reductase] + O2 = 16alpha-hydroxyestrone + oxidized [NADPH--hemoprotein reductase] + H2O + H(+). It participates in steroid metabolism. The protein operates within lipid metabolism; arachidonate metabolism. It functions in the pathway cofactor metabolism; retinol metabolism. Its function is as follows. A cytochrome P450 monooxygenase involved in the metabolism of various endogenous substrates, including fatty acids, steroid hormones and vitamins. Mechanistically, uses molecular oxygen inserting one oxygen atom into a substrate, and reducing the second into a water molecule, with two electrons provided by NADPH via cytochrome P450 reductase (NADPH--hemoprotein reductase). Primarily catalyzes the epoxidation of double bonds of polyunsaturated fatty acids (PUFA) with a preference for the last double bond. Catalyzes the hydroxylation of carbon-hydrogen bonds. Metabolizes all trans-retinoic acid toward its 4-hydroxylated form. Displays 16-alpha hydroxylase activity toward estrogen steroid hormones, 17beta-estradiol (E2) and estrone (E1). Plays a role in the oxidative metabolism of xenobiotics. It is the principal enzyme responsible for the metabolism of the anti-cancer drug paclitaxel (taxol). This chain is Cytochrome P450 2C8, found in Homo sapiens (Human).